The following is a 234-amino-acid chain: MTPSLKRLPEADRPRERLLRLGPEKLSDVELLAILLGTGSRGRSVIEVARDLLHHCEAKDPGGGLRALLHLRDAERSELVKGLGPAKVCTILAGLHLGLRASAAPLRRVDLCNPRAVFEFLAPRMAHLSIEQFHVILLNAKNQVIDVECVSEGTLTASLVHPREVFKTAIRRSAHAVILAHNHPSGDPTPSREDREITRRLVQAGRVIGIEVLDHLVVGQGGYTSFRERGLLTG.

An MPN domain is found at 110 to 232 (DLCNPRAVFE…YTSFRERGLL (123 aa)). Positions 181, 183, and 194 each coordinate Zn(2+). The short motif at 181–194 (HNHPSGDPTPSRED) is the JAMM motif element.

The protein belongs to the UPF0758 family.

The protein is UPF0758 protein STH371 of Symbiobacterium thermophilum (strain DSM 24528 / JCM 14929 / IAM 14863 / T).